The primary structure comprises 423 residues: Serine--tRNA ligase (423 aa).

231–233 lines the L-serine pocket; that stretch reads TGE. 262-264 contributes to the ATP binding site; it reads RSE. Residue Glu-285 participates in L-serine binding. 349–352 is an ATP binding site; it reads EISS. Ser-385 contributes to the L-serine binding site.

This sequence belongs to the class-II aminoacyl-tRNA synthetase family. Type-1 seryl-tRNA synthetase subfamily. Homodimer. The tRNA molecule binds across the dimer.

Its subcellular location is the cytoplasm. It catalyses the reaction tRNA(Ser) + L-serine + ATP = L-seryl-tRNA(Ser) + AMP + diphosphate + H(+). The enzyme catalyses tRNA(Sec) + L-serine + ATP = L-seryl-tRNA(Sec) + AMP + diphosphate + H(+). The protein operates within aminoacyl-tRNA biosynthesis; selenocysteinyl-tRNA(Sec) biosynthesis; L-seryl-tRNA(Sec) from L-serine and tRNA(Sec): step 1/1. Catalyzes the attachment of serine to tRNA(Ser). Is also able to aminoacylate tRNA(Sec) with serine, to form the misacylated tRNA L-seryl-tRNA(Sec), which will be further converted into selenocysteinyl-tRNA(Sec). This Coxiella burnetii (strain RSA 331 / Henzerling II) protein is Serine--tRNA ligase.